Here is a 602-residue protein sequence, read N- to C-terminus: Translation factor GUF1 homolog, organellar chromatophore (602 aa).

The tr-type G domain occupies 7–189 (SRIRNFCIIA…AIVERIPPPV (183 aa)). GTP contacts are provided by residues 16–23 (AHIDHGKS), 82–86 (DTPGH), and 136–139 (NKID).

Belongs to the TRAFAC class translation factor GTPase superfamily. Classic translation factor GTPase family. LepA subfamily.

The protein localises to the plastid. It localises to the organellar chromatophore. It catalyses the reaction GTP + H2O = GDP + phosphate + H(+). Its function is as follows. Promotes protein synthesis. May act as a fidelity factor of the translation reaction, by catalyzing a one-codon backward translocation of tRNAs on improperly translocated ribosomes. The protein is Translation factor GUF1 homolog, organellar chromatophore of Paulinella chromatophora.